Here is a 697-residue protein sequence, read N- to C-terminus: Sodium-dependent phosphate transport protein 2B (697 aa).

The tract at residues M1–V45 is disordered. The Cytoplasmic portion of the chain corresponds to M1–T91. The chain crosses the membrane as a helical span at residues L92–V112. At C113–N136 the chain is on the extracellular side. A helical transmembrane segment spans residues N137–V157. Over Q158 to A213 the chain is Cytoplasmic. The chain crosses the membrane as a helical span at residues F214–L234. Residues E235 to A363 lie on the Extracellular side of the membrane. N-linked (GlcNAc...) asparagine glycosylation is found at N295, N308, N321, and N356. Cysteines 303 and 350 form a disulfide. Residues V364–V384 traverse the membrane as a helical segment. Residues K385–P408 lie on the Cytoplasmic side of the membrane. A helical membrane pass occupies residues F409–I429. Residues V430–Q486 are Extracellular-facing. Residues I487–F507 traverse the membrane as a helical segment. Residues T508–R526 lie on the Cytoplasmic side of the membrane. The helical transmembrane segment at W527 to L547 threads the bilayer. The Extracellular portion of the chain corresponds to S548–G551. A helical membrane pass occupies residues W552 to L572. At R573–V696 the chain is on the cytoplasmic side.

Belongs to the SLC34A transporter family. In terms of tissue distribution, highly abundant in the ileum of small intestine, whereas it is almost absent in the duodenum and in the jejunum.

It is found in the apical cell membrane. The catalysed reaction is 3 Na(+)(out) + phosphate(out) = 3 Na(+)(in) + phosphate(in). Its function is as follows. Involved in actively transporting phosphate into cells via Na(+) cotransport. The protein is Sodium-dependent phosphate transport protein 2B (Slc34a2) of Mus musculus (Mouse).